Reading from the N-terminus, the 252-residue chain is 3-deoxy-manno-octulosonate cytidylyltransferase (252 aa).

The protein belongs to the KdsB family.

It is found in the cytoplasm. The catalysed reaction is 3-deoxy-alpha-D-manno-oct-2-ulosonate + CTP = CMP-3-deoxy-beta-D-manno-octulosonate + diphosphate. The protein operates within nucleotide-sugar biosynthesis; CMP-3-deoxy-D-manno-octulosonate biosynthesis; CMP-3-deoxy-D-manno-octulosonate from 3-deoxy-D-manno-octulosonate and CTP: step 1/1. It participates in bacterial outer membrane biogenesis; lipopolysaccharide biosynthesis. Functionally, activates KDO (a required 8-carbon sugar) for incorporation into bacterial lipopolysaccharide in Gram-negative bacteria. The protein is 3-deoxy-manno-octulosonate cytidylyltransferase of Thiobacillus denitrificans (strain ATCC 25259 / T1).